The sequence spans 216 residues: Superoxide dismutase [Cu-Zn] 2, chloroplastic (216 aa).

The transit peptide at 1–62 directs the protein to the chloroplast; sequence MAATNTILAF…APSKALTVVS (62 aa). Cu cation is bound by residues His108, His110, and His125. Cys119 and Cys208 are joined by a disulfide. 4 residues coordinate Zn(2+): His125, His133, His142, and Asp145. His182 lines the Cu cation pocket.

This sequence belongs to the Cu-Zn superoxide dismutase family. In terms of assembly, homotetramer. Cu cation is required as a cofactor. It depends on Zn(2+) as a cofactor. In terms of tissue distribution, expressed in leaves (at protein level). The spatial localization is regulated by miR398-mediated silencing. Mostly present in flowers, old rosette leaves and inflorescence, and, to a lower extent, in cauline leaves, stems and roots.

The protein localises to the plastid. The protein resides in the chloroplast. The enzyme catalyses 2 superoxide + 2 H(+) = H2O2 + O2. In terms of biological role, destroys radicals which are normally produced within the cells and which are toxic to biological systems. Mediates tolerance to stress, including photo-oxidative stress. The sequence is that of Superoxide dismutase [Cu-Zn] 2, chloroplastic (CSD2) from Arabidopsis thaliana (Mouse-ear cress).